The following is a 473-amino-acid chain: Uronate isomerase (473 aa).

It belongs to the metallo-dependent hydrolases superfamily. Uronate isomerase family.

The enzyme catalyses D-glucuronate = D-fructuronate. The catalysed reaction is aldehydo-D-galacturonate = keto-D-tagaturonate. It functions in the pathway carbohydrate metabolism; pentose and glucuronate interconversion. The protein is Uronate isomerase (uxaC) of Geobacillus stearothermophilus (Bacillus stearothermophilus).